Reading from the N-terminus, the 177-residue chain is MPIKSRIRTVPDYPKKGIMFRDITTLIKDPVGFRLVIDNMTQHYLSNGIDFDVIVGIEARGFIIGGALSYTLGKGFVPVRKPGKLPADVVQLEYDLEYGSDKIEMHTDSLVKGQRVLLVDDLLATGGTALAAAALVEKLGGVVASMGFIVNLPDVGGEKKIRDKGYNIFSLTEFEGD.

The protein belongs to the purine/pyrimidine phosphoribosyltransferase family. Homodimer.

It localises to the cytoplasm. The catalysed reaction is AMP + diphosphate = 5-phospho-alpha-D-ribose 1-diphosphate + adenine. It participates in purine metabolism; AMP biosynthesis via salvage pathway; AMP from adenine: step 1/1. Catalyzes a salvage reaction resulting in the formation of AMP, that is energically less costly than de novo synthesis. The protein is Adenine phosphoribosyltransferase of Chlorobaculum parvum (strain DSM 263 / NCIMB 8327) (Chlorobium vibrioforme subsp. thiosulfatophilum).